The primary structure comprises 345 residues: NADPH dehydrogenase (345 aa).

FMN is bound at residue 23-26; that stretch reads SPMC. Tyr-28 lines the substrate pocket. FMN-binding residues include Ala-60 and Gln-102. A substrate-binding site is contributed by 164–167; it reads HGAH. FMN contacts are provided by residues Arg-215 and 307 to 308; that span reads GR.

This sequence belongs to the NADH:flavin oxidoreductase/NADH oxidase family. NamA subfamily. Homotetramer. It depends on FMN as a cofactor.

The enzyme catalyses A + NADPH + H(+) = AH2 + NADP(+). Catalyzes the reduction of the double bond of an array of alpha,beta-unsaturated aldehydes and ketones. It also reduces the nitro group of nitroester and nitroaromatic compounds. It could have a role in detoxification processes. This Bacillus cereus (strain AH820) protein is NADPH dehydrogenase.